The sequence spans 296 residues: MGPTASGKTALALELAEKHNCEIISVDSALIYRGMDIGSAKPSAEELARGPHRLIDIRDPAESYSAADFRADALREIEQIISMGKTPVLVGGTMMYFKALLEGLSPLPSADEAIRAEIQAEADANGWEALHAQLREIDPVSAERIHPNDPQRLSRAIEVYRISGKSLTELTQTKSAPLPYDVVQFAIAPRERKVLHELIGQRFRIMLEQGFIDEVAQLKARGDLHLDLPSMRCVGYRQCWQYLDGEFDYDTMVEKAVAATRQLAKRQLTWLRSWPELNWLESGAEGNLVTLMRQCR.

2-9 (GPTASGKT) serves as a coordination point for ATP. A substrate-binding site is contributed by 4-9 (TASGKT). Interaction with substrate tRNA stretches follow at residues 27–30 (DSAL), 151–155 (QRLSR), and 232–237 (RCVGYR).

The protein belongs to the IPP transferase family. In terms of assembly, monomer. Mg(2+) is required as a cofactor.

It carries out the reaction adenosine(37) in tRNA + dimethylallyl diphosphate = N(6)-dimethylallyladenosine(37) in tRNA + diphosphate. Functionally, catalyzes the transfer of a dimethylallyl group onto the adenine at position 37 in tRNAs that read codons beginning with uridine, leading to the formation of N6-(dimethylallyl)adenosine (i(6)A). The chain is tRNA dimethylallyltransferase from Shewanella sp. (strain MR-7).